Reading from the N-terminus, the 490-residue chain is Protein U94 (490 aa).

One can recognise a PV NS1-Nuc domain in the interval 1 to 210; sequence MFSIINPSDD…SHFNKKPNVK (210 aa). The region spanning 312 to 463 is the SF3 helicase domain; the sequence is DPILAGTILY…IPRNFPVIQK (152 aa). Position 338–345 (338–345) interacts with ATP; the sequence is GPPGCGKS.

It localises to the host nucleus. This Human herpesvirus 6B (HHV-6 variant B) protein is Protein U94 (U94).